Consider the following 341-residue polypeptide: tRNA N6-adenosine threonylcarbamoyltransferase (341 aa).

The Fe cation site is built by His111 and His115. Substrate is bound by residues 134 to 138, Asp167, Gly180, and Asn276; that span reads LVSGG. Asp304 lines the Fe cation pocket.

It belongs to the KAE1 / TsaD family. Fe(2+) is required as a cofactor.

Its subcellular location is the cytoplasm. It carries out the reaction L-threonylcarbamoyladenylate + adenosine(37) in tRNA = N(6)-L-threonylcarbamoyladenosine(37) in tRNA + AMP + H(+). Its function is as follows. Required for the formation of a threonylcarbamoyl group on adenosine at position 37 (t(6)A37) in tRNAs that read codons beginning with adenine. Is involved in the transfer of the threonylcarbamoyl moiety of threonylcarbamoyl-AMP (TC-AMP) to the N6 group of A37, together with TsaE and TsaB. TsaD likely plays a direct catalytic role in this reaction. This chain is tRNA N6-adenosine threonylcarbamoyltransferase, found in Pseudomonas paraeruginosa (strain DSM 24068 / PA7) (Pseudomonas aeruginosa (strain PA7)).